A 444-amino-acid chain; its full sequence is UDP-N-acetylglucosamine 1-carboxyvinyltransferase (444 aa).

Residue 22 to 23 (KN) participates in phosphoenolpyruvate binding. Arg94 contacts UDP-N-acetyl-alpha-D-glucosamine. Catalysis depends on Asp119, which acts as the Proton donor. Positions 309 and 331 each coordinate UDP-N-acetyl-alpha-D-glucosamine.

This sequence belongs to the EPSP synthase family. MurA subfamily.

Its subcellular location is the cytoplasm. It carries out the reaction phosphoenolpyruvate + UDP-N-acetyl-alpha-D-glucosamine = UDP-N-acetyl-3-O-(1-carboxyvinyl)-alpha-D-glucosamine + phosphate. The protein operates within cell wall biogenesis; peptidoglycan biosynthesis. Its function is as follows. Cell wall formation. Adds enolpyruvyl to UDP-N-acetylglucosamine. This is UDP-N-acetylglucosamine 1-carboxyvinyltransferase from Chlamydia trachomatis serovar D (strain ATCC VR-885 / DSM 19411 / UW-3/Cx).